Here is a 198-residue protein sequence, read N- to C-terminus: FMN-dependent NADH:quinone oxidoreductase (198 aa).

Residues 92–95 (MWNL) and 136–139 (SRGG) contribute to the FMN site.

This sequence belongs to the azoreductase type 1 family. Homodimer. It depends on FMN as a cofactor.

The catalysed reaction is 2 a quinone + NADH + H(+) = 2 a 1,4-benzosemiquinone + NAD(+). The enzyme catalyses N,N-dimethyl-1,4-phenylenediamine + anthranilate + 2 NAD(+) = 2-(4-dimethylaminophenyl)diazenylbenzoate + 2 NADH + 2 H(+). Functionally, quinone reductase that provides resistance to thiol-specific stress caused by electrophilic quinones. Its function is as follows. Also exhibits azoreductase activity. Catalyzes the reductive cleavage of the azo bond in aromatic azo compounds to the corresponding amines. This Clostridium perfringens (strain ATCC 13124 / DSM 756 / JCM 1290 / NCIMB 6125 / NCTC 8237 / Type A) protein is FMN-dependent NADH:quinone oxidoreductase.